Reading from the N-terminus, the 370-residue chain is Pyrimidine monooxygenase RutA (370 aa).

Residues 49 to 50 (IK), Asn115, Glu124, 140 to 141 (RY), and Ser190 each bind FMN.

Belongs to the NtaA/SnaA/DszA monooxygenase family. RutA subfamily.

The enzyme catalyses uracil + FMNH2 + NADH + O2 = (Z)-3-ureidoacrylate + FMN + NAD(+) + H2O + H(+). It catalyses the reaction thymine + FMNH2 + NADH + O2 = (Z)-2-methylureidoacrylate + FMN + NAD(+) + H2O + H(+). Catalyzes the pyrimidine ring opening between N-3 and C-4 by an unusual flavin hydroperoxide-catalyzed mechanism, adding oxygen atoms in the process to yield ureidoacrylate peracid, that immediately reacts with FMN forming ureidoacrylate and FMN-N(5)-oxide. The FMN-N(5)-oxide reacts spontaneously with NADH to produce FMN. Requires the flavin reductase RutF to regenerate FMN in vivo. This chain is Pyrimidine monooxygenase RutA, found in Variovorax paradoxus (strain S110).